We begin with the raw amino-acid sequence, 1444 residues long: ABC transporter G family member 39 (1444 aa).

The segment at 1-36 (MDIVRMGSVASGGGSVRRTASSWRGTSGRSDAFGRS) is disordered. The segment covering 19-29 (TASSWRGTSGR) has biased composition (polar residues). The ABC transporter 1 domain maps to 154 to 426 (LSAMRIVSSG…FEAMGFKCPE (273 aa)). Residue 187–194 (GPPGSGKT) participates in ATP binding. An ABC transmembrane type-2 1 domain is found at 504 to 717 (ELTKACFSRE…AQNAIAVNEF (214 aa)). Helical transmembrane passes span 522–542 (FVYI…MTVF), 555–575 (GAIF…NGFA), 610–630 (IPIS…VMGF), 642–662 (VLLV…AALG), 667–687 (VADT…GFLI), and 754–774 (IGVG…ILFL). The ABC transporter 2 domain maps to 846 to 1098 (ITFDNIRYSV…HLINYFEGIQ (253 aa)). 891–898 (GVSGAGKT) is a binding site for ATP. The region spanning 1171-1385 (TQCMACLWKQ…TLYGLVASQY (215 aa)) is the ABC transmembrane type-2 2 domain. The next 7 helical transmembrane spans lie at 1192 to 1212 (ATRI…FLNL), 1220 to 1240 (LDLF…GIQN), 1278 to 1298 (IPHI…LIGF), 1305 to 1325 (FFWY…YGMM), 1335 to 1355 (IAAI…GFLI), 1362 to 1382 (IWWR…GLVA), and 1414 to 1434 (LGYV…VFAF).

The protein belongs to the ABC transporter superfamily. ABCG family. PDR (TC 3.A.1.205) subfamily.

The protein localises to the membrane. Functionally, may be a general defense protein. The protein is ABC transporter G family member 39 of Oryza sativa subsp. japonica (Rice).